A 123-amino-acid polypeptide reads, in one-letter code: Small ribosomal subunit protein uS12 (123 aa).

A 3-methylthioaspartic acid modification is found at D89. The disordered stretch occupies residues 101–123 (SLDTSGVKDRKQGRSKYGAKRPK). A compositionally biased stretch (basic residues) spans 113 to 123 (GRSKYGAKRPK).

It belongs to the universal ribosomal protein uS12 family. In terms of assembly, part of the 30S ribosomal subunit. Contacts proteins S8 and S17. May interact with IF1 in the 30S initiation complex.

Functionally, with S4 and S5 plays an important role in translational accuracy. Interacts with and stabilizes bases of the 16S rRNA that are involved in tRNA selection in the A site and with the mRNA backbone. Located at the interface of the 30S and 50S subunits, it traverses the body of the 30S subunit contacting proteins on the other side and probably holding the rRNA structure together. The combined cluster of proteins S8, S12 and S17 appears to hold together the shoulder and platform of the 30S subunit. The polypeptide is Small ribosomal subunit protein uS12 (Stutzerimonas stutzeri (strain A1501) (Pseudomonas stutzeri)).